The primary structure comprises 254 residues: Probable transcriptional regulatory protein HDEF_0869 (254 aa).

The disordered stretch occupies residues 1–20; sequence MAGHSKWANTKHRKAAQDAK.

This sequence belongs to the TACO1 family.

The protein localises to the cytoplasm. This chain is Probable transcriptional regulatory protein HDEF_0869, found in Hamiltonella defensa subsp. Acyrthosiphon pisum (strain 5AT).